Here is a 690-residue protein sequence, read N- to C-terminus: Polyribonucleotide nucleotidyltransferase (690 aa).

Mg(2+)-binding residues include aspartate 482 and aspartate 488. Residues 549 to 608 (PRIITIQINPDRIRDVIGPGGKVIRALTEETGATIDIQDNGTVTIASVDGEAGAAAKRRI) form the KH domain. The S1 motif domain maps to 618-686 (DTIYDGKVAK…RQGKIKLSMK (69 aa)).

Belongs to the polyribonucleotide nucleotidyltransferase family. As to quaternary structure, component of the RNA degradosome, which is a multiprotein complex involved in RNA processing and mRNA degradation. The cofactor is Mg(2+).

The protein resides in the cytoplasm. The enzyme catalyses RNA(n+1) + phosphate = RNA(n) + a ribonucleoside 5'-diphosphate. Involved in mRNA degradation. Catalyzes the phosphorolysis of single-stranded polyribonucleotides processively in the 3'- to 5'-direction. The sequence is that of Polyribonucleotide nucleotidyltransferase from Acidithiobacillus ferrooxidans (strain ATCC 23270 / DSM 14882 / CIP 104768 / NCIMB 8455) (Ferrobacillus ferrooxidans (strain ATCC 23270)).